An 855-amino-acid polypeptide reads, in one-letter code: Pre-mRNA-splicing factor SYF1 (855 aa).

HAT repeat units lie at residues 15-47 (LVFE…FKQG), 48-80 (APKP…ARRA), 90-122 (PAYE…FLMD), 124-158 (GRVT…FLRS), 160-192 (PLPE…SSDR), 198-230 (QRLA…LISQ), 235-268 (VQSL…YYIR), 270-305 (GHFE…FEES), and 369-407 (GRPR…FYED). Position 420 is an N6-acetyllysine (Lys420). HAT repeat units follow at residues 498–530 (GTFQ…FLEE), 532–566 (KYFE…KFIS), 571–605 (RKLE…LEEE), 643–677 (YGVT…MECK), and 679–713 (GEID…FEVR). The segment at 808–855 (AELAQQANPEEIQLGEDEDEDEMDLEPNEVRLEQQSVPAAVFGSLKED) is disordered. The segment covering 820-834 (QLGEDEDEDEMDLEP) has biased composition (acidic residues). The residue at position 851 (Ser851) is a Phosphoserine.

The protein belongs to the crooked-neck family. In terms of assembly, associates with RNA polymerase II, the TCR-specific proteins CKN1/CSA and ERCC6/CSB, and XPA. Identified in the spliceosome C complex. Component of the XAB2 complex, a multimeric protein complex composed of XAB2, PRPF19, AQR, ZNF830, ISY1, and PPIE. Identified in a pentameric intron-binding (IB) complex composed of AQR, XAB2, ISY1, ZNF830 and PPIE that is incorporated into the spliceosome as a preassembled complex. The IB complex does not contain PRPF19.

The protein localises to the nucleus. Functionally, involved in pre-mRNA splicing as component of the spliceosome. Involved in transcription-coupled repair (TCR), transcription and pre-mRNA splicing. The chain is Pre-mRNA-splicing factor SYF1 (Xab2) from Rattus norvegicus (Rat).